Here is a 1031-residue protein sequence, read N- to C-terminus: Telomerase reverse transcriptase (1031 aa).

Residues 498–852 (KEVEEWKKSL…DYCDWIGISI (355 aa)) form the Reverse transcriptase domain. Residues Asp603, Asp781, and Asp782 each coordinate Mg(2+).

Belongs to the reverse transcriptase family. Telomerase subfamily. In terms of assembly, component of the telomerase holoenzyme complex composed minimally of the catalytic subunit p123 and the telomerase RNA template component.

It is found in the nucleus. It localises to the chromosome. Its subcellular location is the telomere. The enzyme catalyses DNA(n) + a 2'-deoxyribonucleoside 5'-triphosphate = DNA(n+1) + diphosphate. In terms of biological role, telomerase is a ribonucleoprotein enzyme essential for the replication of chromosome termini in most eukaryotes. It elongates telomeres. It is a reverse transcriptase that adds simple sequence repeats to chromosome ends by copying a template sequence within the RNA component of the enzyme. The chain is Telomerase reverse transcriptase from Euplotes aediculatus (Ciliate).